A 411-amino-acid chain; its full sequence is 1-deoxy-D-xylulose 5-phosphate reductoisomerase (411 aa).

The NADPH site is built by Thr-23, Gly-24, Ser-25, Ile-26, Gly-49, Arg-50, Asn-51, and Asn-137. Lys-138 contributes to the 1-deoxy-D-xylulose 5-phosphate binding site. Glu-139 contributes to the NADPH binding site. Asp-163 serves as a coordination point for Mn(2+). The 1-deoxy-D-xylulose 5-phosphate site is built by Ser-164, Glu-165, Ser-199, and His-222. Glu-165 contacts Mn(2+). Gly-228 is an NADPH binding site. 1-deoxy-D-xylulose 5-phosphate contacts are provided by Ser-235, Asn-240, Lys-241, and Glu-244. Glu-244 contacts Mn(2+).

The protein belongs to the DXR family. Requires Mg(2+) as cofactor. Mn(2+) serves as cofactor.

The enzyme catalyses 2-C-methyl-D-erythritol 4-phosphate + NADP(+) = 1-deoxy-D-xylulose 5-phosphate + NADPH + H(+). It participates in isoprenoid biosynthesis; isopentenyl diphosphate biosynthesis via DXP pathway; isopentenyl diphosphate from 1-deoxy-D-xylulose 5-phosphate: step 1/6. Catalyzes the NADPH-dependent rearrangement and reduction of 1-deoxy-D-xylulose-5-phosphate (DXP) to 2-C-methyl-D-erythritol 4-phosphate (MEP). The chain is 1-deoxy-D-xylulose 5-phosphate reductoisomerase from Mannheimia succiniciproducens (strain KCTC 0769BP / MBEL55E).